Here is a 344-residue protein sequence, read N- to C-terminus: Heat-inducible transcription repressor HrcA (344 aa).

The protein belongs to the HrcA family.

Its function is as follows. Negative regulator of class I heat shock genes (grpE-dnaK-dnaJ and groELS operons). Prevents heat-shock induction of these operons. In Streptococcus mutans serotype c (strain ATCC 700610 / UA159), this protein is Heat-inducible transcription repressor HrcA.